The sequence spans 706 residues: Glutamine-dependent NAD(+) synthetase (706 aa).

One can recognise a CN hydrolase domain in the interval 5 to 275 (VTVATCALNQ…VEVLTATLDL (271 aa)). The Proton acceptor; for glutaminase activity role is filled by E45. Catalysis depends on K114, which acts as the For glutaminase activity. The active-site Nucleophile; for glutaminase activity is the C175. Residues 325–706 (YHSPEEEISL…AEPQSLDGVD (382 aa)) are ligase. 355–362 (PLSGGVDS) contributes to the ATP binding site. S357 is an active-site residue.

In the C-terminal section; belongs to the NAD synthetase family. Homohexamer.

The catalysed reaction is deamido-NAD(+) + L-glutamine + ATP + H2O = L-glutamate + AMP + diphosphate + NAD(+) + H(+). It functions in the pathway cofactor biosynthesis; NAD(+) biosynthesis; NAD(+) from deamido-NAD(+) (L-Gln route): step 1/1. Functionally, catalyzes the final step of the nicotinamide adenine dinucleotide (NAD) de novo synthesis pathway, the ATP-dependent amidation of deamido-NAD using L-glutamine as a nitrogen source. This Homo sapiens (Human) protein is Glutamine-dependent NAD(+) synthetase (NADSYN1).